Here is a 299-residue protein sequence, read N- to C-terminus: ATP phosphoribosyltransferase (299 aa).

This sequence belongs to the ATP phosphoribosyltransferase family. Long subfamily. Mg(2+) serves as cofactor.

Its subcellular location is the cytoplasm. It carries out the reaction 1-(5-phospho-beta-D-ribosyl)-ATP + diphosphate = 5-phospho-alpha-D-ribose 1-diphosphate + ATP. It functions in the pathway amino-acid biosynthesis; L-histidine biosynthesis; L-histidine from 5-phospho-alpha-D-ribose 1-diphosphate: step 1/9. With respect to regulation, feedback inhibited by histidine. In terms of biological role, catalyzes the condensation of ATP and 5-phosphoribose 1-diphosphate to form N'-(5'-phosphoribosyl)-ATP (PR-ATP). Has a crucial role in the pathway because the rate of histidine biosynthesis seems to be controlled primarily by regulation of HisG enzymatic activity. This is ATP phosphoribosyltransferase from Campylobacter lari (strain RM2100 / D67 / ATCC BAA-1060).